The following is a 256-amino-acid chain: MYLEQLKEVNPLTICITNNVVKNFTANGLLALGASPAMSECIEDLEDLLKVADALLINIGTLTKESWQLYQEAIKIANKNQVPVVLDPVAAGASRFRLEVSLDLLKNYSISLLTGNGSEIAALIGEKQASKGADGGKVADLESIAVKANQVFDVPVVVTGETDAIAVRGEVRLLQNGSPLMPLVTGTGCLLGAVLAAFIGSSDRSDDLACLTEAMTVYNVAGEIAEKVAKGKGVGSFQVAFLDALSQMKSEMIMDK.

Residue Met38 coordinates substrate. Residues Thr114 and Thr159 each coordinate ATP. Gly186 is a substrate binding site.

Belongs to the Thz kinase family. Mg(2+) is required as a cofactor.

The enzyme catalyses 5-(2-hydroxyethyl)-4-methylthiazole + ATP = 4-methyl-5-(2-phosphooxyethyl)-thiazole + ADP + H(+). The protein operates within cofactor biosynthesis; thiamine diphosphate biosynthesis; 4-methyl-5-(2-phosphoethyl)-thiazole from 5-(2-hydroxyethyl)-4-methylthiazole: step 1/1. In terms of biological role, catalyzes the phosphorylation of the hydroxyl group of 4-methyl-5-beta-hydroxyethylthiazole (THZ). This Streptococcus agalactiae serotype V (strain ATCC BAA-611 / 2603 V/R) protein is Hydroxyethylthiazole kinase.